A 672-amino-acid chain; its full sequence is Acetyl-coenzyme A synthetase (672 aa).

Residues 205–208 and Thr325 contribute to the CoA site; that span reads RGGK. ATP contacts are provided by residues 401 to 403, 425 to 430, Asp516, and Arg531; these read GEP and DTYWQT. Ser539 serves as a coordination point for CoA. Arg542 serves as a coordination point for ATP. Residue Arg600 coordinates CoA.

The protein belongs to the ATP-dependent AMP-binding enzyme family.

The enzyme catalyses acetate + ATP + CoA = acetyl-CoA + AMP + diphosphate. This Phycomyces blakesleeanus (strain ATCC 8743b / DSM 1359 / FGSC 10004 / NBRC 33097 / NRRL 1555) protein is Acetyl-coenzyme A synthetase (facA).